A 228-amino-acid polypeptide reads, in one-letter code: 2,3-bisphosphoglycerate-dependent phosphoglycerate mutase (228 aa).

Substrate contacts are provided by residues 8–15, 21–22, Arg58, 111–114, Lys122, 138–139, and 182–183; these read RHGQSVWN, SG, ERMY, RR, and GN. Residue His9 is the Tele-phosphohistidine intermediate of the active site. Glu111 serves as the catalytic Proton donor/acceptor.

The protein belongs to the phosphoglycerate mutase family. BPG-dependent PGAM subfamily.

The enzyme catalyses (2R)-2-phosphoglycerate = (2R)-3-phosphoglycerate. It functions in the pathway carbohydrate degradation; glycolysis; pyruvate from D-glyceraldehyde 3-phosphate: step 3/5. Functionally, catalyzes the interconversion of 2-phosphoglycerate and 3-phosphoglycerate. The protein is 2,3-bisphosphoglycerate-dependent phosphoglycerate mutase of Chlamydia pneumoniae (Chlamydophila pneumoniae).